A 72-amino-acid polypeptide reads, in one-letter code: Antimicrobial peptide MeuNaTxbeta-4 (72 aa).

The signal sequence occupies residues 1-5; sequence LIGVK. The region spanning 7 to 69 is the LCN-type CS-alpha/beta domain; sequence EHGYLLDKYT…LWHYETNKCN (63 aa). Intrachain disulfides connect cysteine 18–cysteine 68, cysteine 22–cysteine 43, cysteine 29–cysteine 50, and cysteine 33–cysteine 52.

In terms of tissue distribution, expressed by the venom gland.

It localises to the secreted. Antimicrobial peptide with weak activity against both Gram-positive and -negative bacteria. Its antibiotic activity is potentiated by other antibacterial peptides such as Meucin-49. In Mesobuthus eupeus (Lesser Asian scorpion), this protein is Antimicrobial peptide MeuNaTxbeta-4.